Consider the following 137-residue polypeptide: ATP synthase epsilon chain, chloroplastic (137 aa).

The protein belongs to the ATPase epsilon chain family. In terms of assembly, F-type ATPases have 2 components, CF(1) - the catalytic core - and CF(0) - the membrane proton channel. CF(1) has five subunits: alpha(3), beta(3), gamma(1), delta(1), epsilon(1). CF(0) has three main subunits: a, b and c.

It is found in the plastid. Its subcellular location is the chloroplast thylakoid membrane. Functionally, produces ATP from ADP in the presence of a proton gradient across the membrane. The polypeptide is ATP synthase epsilon chain, chloroplastic (Pinus thunbergii (Japanese black pine)).